A 408-amino-acid polypeptide reads, in one-letter code: Large ribosomal subunit protein uL4 (408 aa).

The interval 58–98 (PYAVSKKAGHQTSAESWGTGRAVSRIPRVPGGGTHRAGQGA) is disordered.

Belongs to the universal ribosomal protein uL4 family.

The chain is Large ribosomal subunit protein uL4 (RPL4) from Prunus armeniaca (Apricot).